We begin with the raw amino-acid sequence, 562 residues long: Putative transport protein NT01EI_2530 (562 aa).

6 helical membrane passes run 8–28 (LLTG…LCLG), 32–52 (LGSI…LLGQ), 66–86 (FMLF…SIFF), 94–114 (MLAL…GKLF), 118–138 (IGLT…LVGA), and 158–178 (HLSL…IFGA). 2 consecutive RCK C-terminal domains span residues 202 to 288 (LDND…SFRN) and 290 to 373 (KEVF…RIGF). A run of 5 helical transmembrane segments spans residues 383–403 (LLAF…TFQF), 406–426 (FSFG…LGFL), 443–463 (MVKE…AGAG), 477–497 (IAGL…GAFV), and 541–561 (IANV…PGVV).

This sequence belongs to the AAE transporter (TC 2.A.81) family. YbjL subfamily.

The protein resides in the cell membrane. The polypeptide is Putative transport protein NT01EI_2530 (Edwardsiella ictaluri (strain 93-146)).